The primary structure comprises 357 residues: MMKKIRKVALAVGGSGGHIVPALSVKEAFSREGIDVLLLGKGLKNHPSLQQGISYREIPSGLPTVLNPIKIMSRTLSLCSGYLKARKELKIFDPDLVIGFGSYHSLPVLLAGLSHKIPLFLHEQNLVPGKVNQLFSRYARGIGVNFSPVTKHFRCPAEEVFLPKRSFSLGSPMMKRCTNHTPTICVVGGSQGAQILNTCVPQALVKLVNKYPNMYVHHIVGPKSDVMKVQHVYNRGEVLCCVKPFEEQLLDVLLAADLVISRAGATILEEILWAKVPGILIPYPGAYGHQEVNAKFFVDVLEGGTMILEKELTEKLLVEKVTFALDSHNREKQRNSLAAYSQQRSTKTFHAFICECL.

UDP-N-acetyl-alpha-D-glucosamine-binding positions include 15–17 (SGG), Asn125, Ser190, and Gln290.

The protein belongs to the glycosyltransferase 28 family. MurG subfamily.

It localises to the cell inner membrane. It catalyses the reaction di-trans,octa-cis-undecaprenyl diphospho-N-acetyl-alpha-D-muramoyl-L-alanyl-D-glutamyl-meso-2,6-diaminopimeloyl-D-alanyl-D-alanine + UDP-N-acetyl-alpha-D-glucosamine = di-trans,octa-cis-undecaprenyl diphospho-[N-acetyl-alpha-D-glucosaminyl-(1-&gt;4)]-N-acetyl-alpha-D-muramoyl-L-alanyl-D-glutamyl-meso-2,6-diaminopimeloyl-D-alanyl-D-alanine + UDP + H(+). Its pathway is cell wall biogenesis; peptidoglycan biosynthesis. Cell wall formation. Catalyzes the transfer of a GlcNAc subunit on undecaprenyl-pyrophosphoryl-MurNAc-pentapeptide (lipid intermediate I) to form undecaprenyl-pyrophosphoryl-MurNAc-(pentapeptide)GlcNAc (lipid intermediate II). The sequence is that of UDP-N-acetylglucosamine--N-acetylmuramyl-(pentapeptide) pyrophosphoryl-undecaprenol N-acetylglucosamine transferase from Chlamydia pneumoniae (Chlamydophila pneumoniae).